Reading from the N-terminus, the 260-residue chain is MTHSQYIFGFHAITSRLRQHPDSIKEIYLDTNRHDQRARDLMSLAETTSTRLILCEQDRLCKMTGTTRHQGVAAHVTKLRRYATLEDLLEGLTEPALLLVLDGVKDPHNLGACLRVADAFGVHAVVVPKDRAVGLSATVHKVASGAVDTVPFFAVTNLARTLRELKEMGLWIVGTAADAPDTLDSVTLTRPLAWVLGAEDGGMRRLTREACDLLVSIPMSGSIESLNVSVSAGICLFETFRQHSQRTGSGLNVPAPKNAV.

S-adenosyl-L-methionine contacts are provided by Gly197, Ile217, and Leu226.

This sequence belongs to the class IV-like SAM-binding methyltransferase superfamily. RNA methyltransferase TrmH family. RlmB subfamily.

The protein resides in the cytoplasm. It carries out the reaction guanosine(2251) in 23S rRNA + S-adenosyl-L-methionine = 2'-O-methylguanosine(2251) in 23S rRNA + S-adenosyl-L-homocysteine + H(+). Functionally, specifically methylates the ribose of guanosine 2251 in 23S rRNA. This is 23S rRNA (guanosine-2'-O-)-methyltransferase RlmB from Nitrosomonas europaea (strain ATCC 19718 / CIP 103999 / KCTC 2705 / NBRC 14298).